A 153-amino-acid polypeptide reads, in one-letter code: SsrA-binding protein (153 aa).

The protein belongs to the SmpB family.

Its subcellular location is the cytoplasm. In terms of biological role, required for rescue of stalled ribosomes mediated by trans-translation. Binds to transfer-messenger RNA (tmRNA), required for stable association of tmRNA with ribosomes. tmRNA and SmpB together mimic tRNA shape, replacing the anticodon stem-loop with SmpB. tmRNA is encoded by the ssrA gene; the 2 termini fold to resemble tRNA(Ala) and it encodes a 'tag peptide', a short internal open reading frame. During trans-translation Ala-aminoacylated tmRNA acts like a tRNA, entering the A-site of stalled ribosomes, displacing the stalled mRNA. The ribosome then switches to translate the ORF on the tmRNA; the nascent peptide is terminated with the 'tag peptide' encoded by the tmRNA and targeted for degradation. The ribosome is freed to recommence translation, which seems to be the essential function of trans-translation. In Desulforudis audaxviator (strain MP104C), this protein is SsrA-binding protein.